The following is a 111-amino-acid chain: Large ribosomal subunit protein uL22 (111 aa).

Belongs to the universal ribosomal protein uL22 family. As to quaternary structure, part of the 50S ribosomal subunit.

This protein binds specifically to 23S rRNA; its binding is stimulated by other ribosomal proteins, e.g. L4, L17, and L20. It is important during the early stages of 50S assembly. It makes multiple contacts with different domains of the 23S rRNA in the assembled 50S subunit and ribosome. Its function is as follows. The globular domain of the protein is located near the polypeptide exit tunnel on the outside of the subunit, while an extended beta-hairpin is found that lines the wall of the exit tunnel in the center of the 70S ribosome. This Wigglesworthia glossinidia brevipalpis protein is Large ribosomal subunit protein uL22.